Reading from the N-terminus, the 41-residue chain is Ornatin-A3 (41 aa).

The Cell attachment site motif lies at 33–35 (RGD).

This sequence belongs to the ornatin family.

It is found in the secreted. Potent inhibitor of fibrinogen interaction with platelet receptors expressed on glycoprotein IIb-IIIa complex. May prevent blood from clotting during either feeding and/or storage of ingested blood. This is Ornatin-A3 from Placobdella ornata (Turtle leech).